The chain runs to 273 residues: Dermonecrotic toxin LhSicTox-alphaIA2bvi (273 aa).

The active site involves H5. Mg(2+)-binding residues include E25 and D27. H41 (nucleophile) is an active-site residue. 2 cysteine pairs are disulfide-bonded: C45-C51 and C47-C190. D85 contributes to the Mg(2+) binding site.

Belongs to the arthropod phospholipase D family. Class II subfamily. The cofactor is Mg(2+). Expressed by the venom gland.

It localises to the secreted. The catalysed reaction is an N-(acyl)-sphingosylphosphocholine = an N-(acyl)-sphingosyl-1,3-cyclic phosphate + choline. It carries out the reaction an N-(acyl)-sphingosylphosphoethanolamine = an N-(acyl)-sphingosyl-1,3-cyclic phosphate + ethanolamine. It catalyses the reaction a 1-acyl-sn-glycero-3-phosphocholine = a 1-acyl-sn-glycero-2,3-cyclic phosphate + choline. The enzyme catalyses a 1-acyl-sn-glycero-3-phosphoethanolamine = a 1-acyl-sn-glycero-2,3-cyclic phosphate + ethanolamine. In terms of biological role, dermonecrotic toxins cleave the phosphodiester linkage between the phosphate and headgroup of certain phospholipids (sphingolipid and lysolipid substrates), forming an alcohol (often choline) and a cyclic phosphate. This toxin acts on sphingomyelin (SM). It may also act on ceramide phosphoethanolamine (CPE), lysophosphatidylcholine (LPC) and lysophosphatidylethanolamine (LPE), but not on lysophosphatidylserine (LPS), and lysophosphatidylglycerol (LPG). It acts by transphosphatidylation, releasing exclusively cyclic phosphate products as second products. Induces dermonecrosis, hemolysis, increased vascular permeability, edema, inflammatory response, and platelet aggregation. The chain is Dermonecrotic toxin LhSicTox-alphaIA2bvi from Loxosceles hirsuta (Recluse spider).